We begin with the raw amino-acid sequence, 210 residues long: Imidazole glycerol phosphate synthase subunit HisH (210 aa).

A Glutamine amidotransferase type-1 domain is found at 3-208 (PIAIIDYGMG…GELVRHAGNA (206 aa)). Residue Cys81 is the Nucleophile of the active site. Active-site residues include His183 and Glu185.

As to quaternary structure, heterodimer of HisH and HisF.

It is found in the cytoplasm. It catalyses the reaction 5-[(5-phospho-1-deoxy-D-ribulos-1-ylimino)methylamino]-1-(5-phospho-beta-D-ribosyl)imidazole-4-carboxamide + L-glutamine = D-erythro-1-(imidazol-4-yl)glycerol 3-phosphate + 5-amino-1-(5-phospho-beta-D-ribosyl)imidazole-4-carboxamide + L-glutamate + H(+). The catalysed reaction is L-glutamine + H2O = L-glutamate + NH4(+). The protein operates within amino-acid biosynthesis; L-histidine biosynthesis; L-histidine from 5-phospho-alpha-D-ribose 1-diphosphate: step 5/9. Functionally, IGPS catalyzes the conversion of PRFAR and glutamine to IGP, AICAR and glutamate. The HisH subunit catalyzes the hydrolysis of glutamine to glutamate and ammonia as part of the synthesis of IGP and AICAR. The resulting ammonia molecule is channeled to the active site of HisF. This is Imidazole glycerol phosphate synthase subunit HisH from Moorella thermoacetica (strain ATCC 39073 / JCM 9320).